The primary structure comprises 161 residues: Alpha-crystallin A chain (161 aa).

Met-1 carries the post-translational modification N-acetylmethionine. A required for complex formation with BFSP1 and BFSP2 region spans residues 1-53 (MDVTIQHPWFKRALGPFYHNRLFDQFFGEGLFEYDLLPFQSLFRTVLDSGISE). Deamidated glutamine; partial occurs at positions 6 and 40. The sHSP domain occupies 41-150 (SLFRTVLDSG…SHSERAIPVS (110 aa)). Lys-87 carries the post-translational modification N6-acetyllysine. His-88 lines the Zn(2+) pocket. Asn-89 carries the post-translational modification Deamidated asparagine; partial. Positions 90 and 95 each coordinate Zn(2+). Ser-110 bears the Phosphoserine mark. The residue at position 111 (Asn-111) is a Deamidated asparagine; partial. A disulfide bridge connects residues Cys-119 and Cys-130. Gln-135 carries the post-translational modification Deamidated glutamine; partial. The tract at residues 135-161 (QSGMDASHSERAIPVSREEKASSAPNS) is disordered. Positions 141–155 (SHSERAIPVSREEKA) are enriched in basic and acidic residues. His-142 provides a ligand contact to Zn(2+). O-linked (GlcNAc) serine glycosylation is present at Ser-150.

It belongs to the small heat shock protein (HSP20) family. As to quaternary structure, heteromer composed of three CRYAA and one CRYAB subunits. Inter-subunit bridging via zinc ions enhances stability, which is crucial as there is no protein turn over in the lens. Can also form homodimers and homotetramers (dimers of dimers) which serve as the building blocks of homooligomers. Within homooligomers, the zinc-binding motif is created from residues of 3 different molecules. His-88 and Glu-90 from one molecule are ligands of the zinc ion, and His-95 and His-142 residues from additional molecules complete the site with tetrahedral coordination geometry. Part of a complex required for lens intermediate filament formation composed of BFSP1, BFSP2 and CRYAA. Undergoes age-dependent proteolytical cleavage at the C-terminus.

The protein resides in the cytoplasm. The protein localises to the nucleus. Contributes to the transparency and refractive index of the lens. In its oxidized form (absence of intramolecular disulfide bond), acts as a chaperone, preventing aggregation of various proteins under a wide range of stress conditions. Required for the correct formation of lens intermediate filaments as part of a complex composed of BFSP1, BFSP2 and CRYAA. In Trichechus inunguis (Amazon manatee), this protein is Alpha-crystallin A chain (CRYAA).